The sequence spans 560 residues: Kinesin light chain 1 (560 aa).

Residues 31-99 adopt a coiled-coil conformation; it reads VIQGLEALKN…MALSNHLNAV (69 aa). Basic and acidic residues predominate over residues 155–176; the sequence is KKYDDDISPSEDKDTDSTKEPL. The disordered stretch occupies residues 155–203; it reads KKYDDDISPSEDKDTDSTKEPLDDLFPNDEDDPGQGIQQQHSSAAAAAQ. Ser162 bears the Phosphoserine mark. The segment covering 192–203 has biased composition (low complexity); that stretch reads QQQHSSAAAAAQ. TPR repeat units follow at residues 213–246, 255–288, 297–330, 339–372, and 381–414; these read LRTLHNLVIQYASQGRYEVAVPLCKQALEDLEKT, ATMLNILALVYRDQNKYKDAANLLNDALAIREKT, AATLNNLAVLYGKRGKYKEAEPLCKRALEIREKV, AKQLNNLALLCQNQGKYEEVEYYYQRALEIYQTK, and AKTKNNLASCYLKQGKFKQAETLYKEILTRAHER. A Phosphotyrosine modification is found at Tyr449. At Ser460 the chain carries Phosphoserine. The stretch at 464-497 is one TPR 6 repeat; the sequence is TTTLKNLGALYRRQGKFEAAETLEEAAMRSRKQG. A phosphoserine; by AMPK mark is found at Ser521 and Ser524.

The protein belongs to the kinesin light chain family. In terms of assembly, oligomeric complex composed of two heavy chains and two light chains. Interacts with SPAG9. Interacts with ATCAY; may link mitochondria to KLC1 and regulate mitochondria localization into neuron projections. Interacts (via TPR repeats) with TOR1A; the interaction associates TOR1A with the kinesin oligomeric complex. Interacts with BORCS5. Interacts with MAPK8IP3/JIP3 and NTRK2/TRKB; interaction with NTRK2/TRKB is mediated by MAPK8IP3/JIP3. Interacts with CLSTN1; phosphorylation at Ser-460 inhibits interaction with CLSTN1. In terms of processing, phosphorylation at Ser-460 by ERK inhibits interaction with CLSTN1 and localization to cytoplasmic vesicles.

It is found in the cell projection. Its subcellular location is the growth cone. The protein resides in the cytoplasmic vesicle. It localises to the cytoplasm. The protein localises to the cytoskeleton. In terms of biological role, kinesin is a microtubule-associated force-producing protein that may play a role in organelle transport. The light chain may function in coupling of cargo to the heavy chain or in the modulation of its ATPase activity. This chain is Kinesin light chain 1 (KLC1), found in Pongo abelii (Sumatran orangutan).